The following is a 279-amino-acid chain: Methyltransferase ausD (279 aa).

S-adenosyl-L-methionine-binding positions include 124–125 and 152–153; these read DI and DV.

The protein belongs to the class I-like SAM-binding methyltransferase superfamily. Homodimer.

Its pathway is secondary metabolite biosynthesis; terpenoid biosynthesis. Its function is as follows. Methyltransferase; part of the gene cluster A that mediates the biosynthesis of the fungal meroterpenoid acetoxydehydroaustin. The first step of the pathway is the synthesis of 3,5-dimethylorsellinic acid by the polyketide synthase ausA. 3,5-dimethylorsellinic acid is then prenylated by the polyprenyl transferase ausN. Further epoxidation by the FAD-dependent monooxygenase ausM and cyclization by the probable terpene cyclase ausL lead to the formation of protoaustinoid A. Protoaustinoid A is then oxidized to spiro-lactone preaustinoid A3 by the combined action of the FAD-binding monooxygenases ausB and ausC, and the dioxygenase ausE. Acid-catalyzed keto-rearrangement and ring contraction of the tetraketide portion of preaustinoid A3 by ausJ lead to the formation of preaustinoid A4. The aldo-keto reductase ausK, with the help of ausH, is involved in the next step by transforming preaustinoid A4 into isoaustinone which is in turn hydroxylated by the P450 monooxygenase ausI to form austinolide. The cytochrome P450 monooxygenase ausG then modifies austinolide to austinol. Austinol is further acetylated to austin by the O-acetyltransferase ausP, which spontaneously changes to dehydroaustin. The cytochrome P450 monooxygenase then converts dehydroaustin is into 7-dehydrodehydroaustin. The hydroxylation catalyzed by ausR permits the second O-acetyltransferase ausQ to add an additional acetyl group to the molecule, leading to the formation of acetoxydehydroaustin. Due to genetic rearrangements of the clusters and the subsequent loss of some enzymes, the end product of the Penicillium brasilianum austinoid biosynthesis clusters is acetoxydehydroaustin. The sequence is that of Methyltransferase ausD from Penicillium brasilianum.